Reading from the N-terminus, the 462-residue chain is ATP synthase subunit beta (462 aa).

151-158 contributes to the ATP binding site; sequence GGAGVGKT.

This sequence belongs to the ATPase alpha/beta chains family. F-type ATPases have 2 components, CF(1) - the catalytic core - and CF(0) - the membrane proton channel. CF(1) has five subunits: alpha(3), beta(3), gamma(1), delta(1), epsilon(1). CF(0) has four main subunits: a(1), b(1), b'(1) and c(9-12).

Its subcellular location is the cell inner membrane. The enzyme catalyses ATP + H2O + 4 H(+)(in) = ADP + phosphate + 5 H(+)(out). Its function is as follows. Produces ATP from ADP in the presence of a proton gradient across the membrane. The catalytic sites are hosted primarily by the beta subunits. The protein is ATP synthase subunit beta of Pelodictyon phaeoclathratiforme (strain DSM 5477 / BU-1).